The following is a 1222-amino-acid chain: Protein SCP160 (1222 aa).

Over residues 1-12 (MSEEQTAIDSPP) the composition is skewed to polar residues. The tract at residues 1-59 (MSEEQTAIDSPPSTVEGSVETVTTIDSPSTTASTIAATAEEHPQLEKKPTPLPSLKDLP) is disordered. The segment covering 13-38 (STVEGSVETVTTIDSPSTTASTIAAT) has biased composition (low complexity). The span at 39–49 (AEEHPQLEKKP) shows a compositional bias: basic and acidic residues. Thr-50 is modified (phosphothreonine). Phosphoserine is present on residues Ser-54, Ser-63, Ser-85, Ser-87, and Ser-89. Residues 79–98 (KPAVSNSPSPSPSAPSLTTG) form a disordered region. The 73-residue stretch at 177-249 (PINAVIEVPS…ESVNLAKAKI (73 aa)) folds into the KH 1 domain. Ser-630 carries the post-translational modification Phosphoserine. KH domains lie at 634-702 (KSKM…KKYL), 712-771 (IITK…HEEL), 782-851 (GHKM…AKRV), 861-929 (FVTE…VEEI), and 939-1001 (SVTK…EKKI). Ser-1112 bears the Phosphoserine mark. The KH 7 domain maps to 1153 to 1216 (YAGYVWGADT…AGVEKAGEMV (64 aa)).

It localises to the endoplasmic reticulum membrane. It is found in the nucleus membrane. In terms of biological role, involved in the control of mitotic chromosome transmission. Required during cell division for faithful partitioning of the ER-nuclear envelope membranes which, in S.cerevisiae, enclose the duplicated chromosomes. The protein is Protein SCP160 (SCP160) of Saccharomyces cerevisiae (strain ATCC 204508 / S288c) (Baker's yeast).